The chain runs to 197 residues: Protein lin-7 homolog C (197 aa).

N-acetylalanine is present on Ala-2. Positions 2–13 (AALGEPVRLERD) match the Kinase interacting site motif. Residues 10–65 (LERDICRAIELLEKLQRSGEVPPQKLQALQRVLQSEFCNAVREVYEHVYETVDISS) form the L27 domain. The PDZ domain maps to 93–175 (VVELPKTEEG…KVKLVVRYTP (83 aa)).

This sequence belongs to the lin-7 family. Forms a complex with CASK and APBA1 or CASKIN1. Component of the brain-specific heterotrimeric complex (LIN-10-LIN-2-LIN-7 complex) composed of at least APBA1, CASK, and LIN7, which associates with the motor protein KIF17 to transport vesicles along microtubules. Can also interact with other modular proteins containing protein-protein interaction domains like PALS1, PALS2, MPP7, DLG1, DLG2 and DLG3 through its L27 domain. Interacts with DLG4 and GRIN2B as well as CDH1 and CTNNB1, the channels KCNJ12/Kir2.2, KCNJ4/Kir2.3 and probably KCNJ2/Kir2.1 and SLC6A12/BGT-1 via its PDZ domain. The association of LIN7A with cadherin and beta-catenin is calcium-dependent, occurs at synaptic junctions and requires the actin cytoskeleton. Interacts with EGFR, ERBB2, ERBB3 and ERBB4 with both PDZ and KID domains. Associates with KIF17 via APBA1. Interacts with HTR4. Forms a tripartite complex composed of DLG1, MPP7 and LIN7 (LIN7A or LIN7C). Interacts with MAPK12.

The protein resides in the cell membrane. It localises to the basolateral cell membrane. The protein localises to the cell junction. It is found in the postsynaptic density membrane. Its subcellular location is the tight junction. The protein resides in the synapse. It localises to the synaptosome. Its function is as follows. Plays a role in establishing and maintaining the asymmetric distribution of channels and receptors at the plasma membrane of polarized cells. Forms membrane-associated multiprotein complexes that may regulate delivery and recycling of proteins to the correct membrane domains. The tripartite complex composed of LIN7 (LIN7A, LIN7B or LIN7C), CASK and APBA1 associates with the motor protein KIF17 to transport vesicles containing N-methyl-D-aspartate (NMDA) receptor subunit NR2B along microtubules. This complex may have the potential to couple synaptic vesicle exocytosis to cell adhesion in brain. Ensures the proper localization of GRIN2B (subunit 2B of the NMDA receptor) to neuronal postsynaptic density and may function in localizing synaptic vesicles at synapses where it is recruited by beta-catenin and cadherin. Required to localize Kir2 channels, GABA transporter (SLC6A12) and EGFR/ERBB1, ERBB2, ERBB3 and ERBB4 to the basolateral membrane of epithelial cells. This chain is Protein lin-7 homolog C (LIN7C), found in Bos taurus (Bovine).